The primary structure comprises 821 residues: Pentatricopeptide repeat-containing protein At4g04790, mitochondrial (821 aa).

Residues 1–74 (MVVSKVNKSL…KLLHVTTSDK (74 aa)) constitute a mitochondrion transit peptide. 7 PPR repeats span residues 372–406 (SSTS…GLMI), 407–441 (SADI…SVKP), 442–476 (NTEN…NLEP), 477–511 (NSSM…GVKP), 512–542 (DSIT…AGVQ), 544–574 (TKRI…PDVP), and 578–612 (QNEL…ECHV). Residues 801-821 (AFSQAPNKKKPKKKMIVLSTK) are disordered.

This sequence belongs to the PPR family. P subfamily.

It localises to the mitochondrion. This chain is Pentatricopeptide repeat-containing protein At4g04790, mitochondrial, found in Arabidopsis thaliana (Mouse-ear cress).